The following is a 439-amino-acid chain: Ribosomal protein uS12 methylthiotransferase RimO (439 aa).

One can recognise an MTTase N-terminal domain in the interval 4-114 (PKVGFVSLGC…VVRAVHGVAP (111 aa)). The [4Fe-4S] cluster site is built by Cys-13, Cys-49, Cys-78, Cys-147, Cys-151, and Cys-154. One can recognise a Radical SAM core domain in the interval 133–370 (LTPRHYAYLK…MEHQQAISTA (238 aa)). The TRAM domain occupies 373 to 439 (STRVGREIDV…EYDLWGERIA (67 aa)).

Belongs to the methylthiotransferase family. RimO subfamily. Requires [4Fe-4S] cluster as cofactor.

The protein resides in the cytoplasm. The enzyme catalyses L-aspartate(89)-[ribosomal protein uS12]-hydrogen + (sulfur carrier)-SH + AH2 + 2 S-adenosyl-L-methionine = 3-methylsulfanyl-L-aspartate(89)-[ribosomal protein uS12]-hydrogen + (sulfur carrier)-H + 5'-deoxyadenosine + L-methionine + A + S-adenosyl-L-homocysteine + 2 H(+). Functionally, catalyzes the methylthiolation of an aspartic acid residue of ribosomal protein uS12. The chain is Ribosomal protein uS12 methylthiotransferase RimO from Bordetella parapertussis (strain 12822 / ATCC BAA-587 / NCTC 13253).